The primary structure comprises 1370 residues: Putative surface protein SA2285 (1370 aa).

Residues 1-50 (MRDKKGPVNKRVDFLSNKLNKYSIRKFTVGTASILIGSLMYLGTQQEAEA) form the signal peptide. Disordered stretches follow at residues 77-116 (NKDT…EDTP), 439-472 (KFNP…NPLT), and 495-1344 (EYGP…TGLE). 24 stretches are compositionally biased toward basic and acidic residues: residues 96–116 (DTIE…EDTP), 450–460 (KVTREGQKGEK), 504–522 (GHRD…EEVP), 553–569 (SIVE…RKFN), 578–588 (KVTREGQKGEK), 605–618 (SKGE…KDPI), 632–650 (GHRD…EEVP), 681–697 (SIVE…RKFN), 706–716 (KVTREGQKGEK), 733–746 (SKGE…KDPI), 760–778 (GHRD…EEVP), 809–825 (SIVE…RKFN), 834–844 (KVTREGQKGEK), 861–874 (SKGE…KDPI), 888–906 (GHRD…EEVP), 937–953 (SIVE…RKFN), 962–972 (KVTREGQKGEK), 989–1002 (SKGE…KDPI), 1016–1034 (GHRD…EEVP), 1065–1081 (SIVE…RKFN), 1090–1100 (KVTREGQKGEK), 1117–1130 (SKGE…KDPV), 1174–1185 (KVIEEPVDDVIK), and 1202–1221 (FETK…RVKQ). One can recognise a G5 1 domain in the interval 418–500 (SAKNNNRIRK…NELTEYGPET (83 aa)). One can recognise a G5 2 domain in the interval 546-628 (YGPVKGDSIV…NELTEYGPET (83 aa)). The G5 3 domain occupies 674–756 (YGPVKGDSIV…NELTEYGPET (83 aa)). The 83-residue stretch at 802–884 (YGPVKGDSIV…NELTEYGPET (83 aa)) folds into the G5 4 domain. A G5 5 domain is found at 930 to 1012 (YGPVKGDSIV…NELTEYGPET (83 aa)). A G5 6 domain is found at 1058–1140 (YGPVKGDSIV…NELTEFGGEK (83 aa)). The G5 7 domain maps to 1186 to 1268 (HGPKTGTPET…DKIVEFGGEK (83 aa)). The span at 1224-1238 (QPGSKTITTPITVNP) shows a compositional bias: polar residues. Residues 1252 to 1282 (EITKQPVDKIVEFGGEKPKDPKGPENPEKPS) show a composition bias toward basic and acidic residues. Positions 1338–1342 (LPKTG) match the LPXTG sorting signal motif. Pentaglycyl murein peptidoglycan amidated threonine is present on threonine 1341. The propeptide at 1342–1370 (GLESTQKGLIFSSIIGIAGLMLLARRRKN) is removed by sortase.

It localises to the secreted. It is found in the cell wall. This chain is Putative surface protein SA2285, found in Staphylococcus aureus (strain N315).